The following is a 300-amino-acid chain: Small ribosomal subunit protein uS2 (300 aa).

The disordered stretch occupies residues 228–300 (RAGLSADKDA…PAAEAPSTEA (73 aa)). A compositionally biased stretch (low complexity) spans 258–300 (AAPAAEAAPAAEAAPAAEAAPAAEAQAAPAAEAPAAEAPSTEA).

The protein belongs to the universal ribosomal protein uS2 family.

The polypeptide is Small ribosomal subunit protein uS2 (Rhodococcus jostii (strain RHA1)).